We begin with the raw amino-acid sequence, 174 residues long: Cytidylate kinase (174 aa).

7-15 (GLPGTGTTT) lines the ATP pocket.

This sequence belongs to the cytidylate kinase family. Type 2 subfamily.

The protein localises to the cytoplasm. It catalyses the reaction CMP + ATP = CDP + ADP. It carries out the reaction dCMP + ATP = dCDP + ADP. The polypeptide is Cytidylate kinase (Methanococcus vannielii (strain ATCC 35089 / DSM 1224 / JCM 13029 / OCM 148 / SB)).